The primary structure comprises 276 residues: Bis(5'-nucleosyl)-tetraphosphatase, symmetrical (276 aa).

This sequence belongs to the Ap4A hydrolase family.

The enzyme catalyses P(1),P(4)-bis(5'-adenosyl) tetraphosphate + H2O = 2 ADP + 2 H(+). Functionally, hydrolyzes diadenosine 5',5'''-P1,P4-tetraphosphate to yield ADP. In Psychromonas ingrahamii (strain DSM 17664 / CCUG 51855 / 37), this protein is Bis(5'-nucleosyl)-tetraphosphatase, symmetrical.